A 500-amino-acid chain; its full sequence is Inner membrane transporter YjeM (500 aa).

Over 1 to 7 (MPHTIKK) the chain is Cytoplasmic. The chain crosses the membrane as a helical span at residues 8–28 (MSLIGLILMIFTSVFGFANSP). Over 29–37 (SAYYLMGYS) the chain is Periplasmic. The helical transmembrane segment at 38–58 (AIPFYIFSALLFFIPFALMMA) threads the bilayer. Residues 59 to 82 (EMGAAYRKEEGGIYSWMNNSVGPR) lie on the Cytoplasmic side of the membrane. A helical membrane pass occupies residues 83–103 (FAFIGTFMWFSSYIIWMVSTS). At 104 to 132 (AKVWVPFSTFLYGSDMTQHWRIAGLEPTQ) the chain is on the periplasmic side. The chain crosses the membrane as a helical span at residues 133–153 (VVGLLAVAWMILVTVVASKGI). Residues 154–163 (NKIARITAVG) lie on the Cytoplasmic side of the membrane. Residues 164-184 (GIAVMCLNLVLLLVSITILLL) traverse the membrane as a helical segment. Over 185-209 (NGGHFAQDINFLASPNPGYQSGLAM) the chain is Periplasmic. The helical transmembrane segment at 210–230 (LSFVVFAIFAYGGIEAVGGLV) threads the bilayer. At 231-243 (DKTENPEKNFAKG) the chain is on the cytoplasmic side. The chain crosses the membrane as a helical span at residues 244-264 (IVFAAIVISIGYSLAIFLWGV). Over 265 to 319 (STNWQQVLSNGSVNLGNITYVLMKSLGMTLGNALHLSPEASLSLGVWFARITGLS) the chain is Periplasmic. A helical membrane pass occupies residues 320 to 340 (MFLAYTGAFFTLCYSPLKAII). Residues 341 to 369 (QGTPKALWPEPMTRLNAMGMPSIAMWMQC) lie on the Cytoplasmic side of the membrane. The chain crosses the membrane as a helical span at residues 370–390 (GLVTVFILLVSFGGGTASAFF). Over 391 to 394 (NKLT) the chain is Periplasmic. A helical membrane pass occupies residues 395 to 415 (LMANVSMTLPYLFLALAFPFF). Over 416-433 (KARQDLDRPFVIFKTHLS) the chain is Cytoplasmic. A helical membrane pass occupies residues 434 to 454 (AMIATVVVVLVVTFANVFTII). Topologically, residues 455 to 462 (QPVVEAGD) are periplasmic. The helical transmembrane segment at 463 to 483 (WDSTLWMIGGPVFFSLLAMAI) threads the bilayer. Residues 484-500 (YQNYCSRVAKNPQWAVE) lie on the Cytoplasmic side of the membrane.

This sequence belongs to the amino acid-polyamine-organocation (APC) superfamily.

It localises to the cell inner membrane. This Escherichia coli (strain K12) protein is Inner membrane transporter YjeM (yjeM).